The chain runs to 337 residues: Cholinesterase 2 (337 aa).

Ser-99 serves as the catalytic Acyl-ester intermediate. A disulfide bond links Cys-153 and Cys-165. The Charge relay system role is filled by Glu-224. Asn-290 carries an N-linked (GlcNAc...) asparagine glycan.

It belongs to the type-B carboxylesterase/lipase family.

The catalysed reaction is an acylcholine + H2O = a carboxylate + choline + H(+). This Branchiostoma lanceolatum (Common lancelet) protein is Cholinesterase 2 (CHE2).